The primary structure comprises 62 residues: uncharacterized protein (62 aa).

Its subcellular location is the mitochondrion. This is an uncharacterized protein from Marchantia polymorpha (Common liverwort).